Here is a 233-residue protein sequence, read N- to C-terminus: Homeobox protein Hox-B6b (233 aa).

An Antp-type hexapeptide motif is present at residues 136 to 141; the sequence is IYPWMQ. The homeobox DNA-binding region spans 155-214; the sequence is GRRGRQTYTRYQTLELEKEFHFNRYLTRRRRIEISHALCLTERQIKIWFQNRRMKWKKEN. The tract at residues 213-233 is disordered; it reads ENKLLNPSKTPEEEEEAEKKS. The span at 224–233 shows a compositional bias: acidic residues; it reads EEEEEAEKKS.

Belongs to the Antp homeobox family.

It is found in the nucleus. Functionally, sequence-specific transcription factor which is part of a developmental regulatory system that provides cells with specific positional identities on the anterior-posterior axis. This Takifugu rubripes (Japanese pufferfish) protein is Homeobox protein Hox-B6b (hoxb6b).